The chain runs to 813 residues: Serine/threonine-protein kinase kin-29 (813 aa).

A Protein kinase domain is found at 18–269; the sequence is YDVGRAIGKG…IQNVLAHRWM (252 aa). ATP-binding positions include 24-32 and Lys-47; that span reads IGKGNFATV. The active-site Proton acceptor is the Asp-140. The interval 383-412 is disordered; it reads LSSPDCDSDDSSNSDLCDESPLSSLEPNHK. A compositionally biased stretch (acidic residues) spans 388-400; the sequence is CDSDDSSNSDLCD.

Belongs to the protein kinase superfamily. CAMK Ser/Thr protein kinase family. SNF1 subfamily. Interacts with tax-6. The cofactor is Mg(2+). In terms of processing, autophosphorylated. Elevated cAMP levels appears to act via PKA to directly or indirectly phosphorylate multiple sites on kin-29 and inhibit function.

Its subcellular location is the cytoplasm. The protein localises to the nucleus. It catalyses the reaction L-seryl-[protein] + ATP = O-phospho-L-seryl-[protein] + ADP + H(+). The enzyme catalyses L-threonyl-[protein] + ATP = O-phospho-L-threonyl-[protein] + ADP + H(+). Regulates chemoreceptor expression by phosphorylating the hda-4 class II histone deacetylase (HDAC) and inhibiting the gene repression functions of hda-4 and the mef-2 transcription factor, enabling the correct sensing and transduction of food signals. Role in determining body size, the dauer decision and serotonin-mediated egg laying. May modulate the Sma/Mab pathway and regulates development in the later larval stages. This is Serine/threonine-protein kinase kin-29 from Caenorhabditis briggsae.